The following is a 1216-amino-acid chain: MEMELEPELEEELGVSLDELRKWIEEQVDSSEAVQKRKADLEQLQEWVEQREKEVADIDALCSNASESVVQCEALVKEVYSNMGLVYRESSSDDEGGKANPSEVIEIDDDDDDDVIAVGCLVPPKKSLTQAKDPALKEASAALQRTSQQVQNLAQTVNRTAQSGVTTPVKTGGPPGQGPLAVPAVFMSSAPRNTPTQPNPNIKQDSIKINMTLLGKKRTKTWHRGTLVAIKQVGNNLKYKVRFENKGKSLLSGNHVAFEYHPTLERLFVGARVVARYKDGNQVWLYAGVVAEMPNSKNRMRFLIFFDDGYASYVGLPELYPICRPLKKTWEDIEDASCRDFIEEYITSYPNRPMVLLKPGQIIKTEWEGTWWKSRVEEVDGSLVKMLFLDDKRSEWIYRGSTRLEPMFNLKMNTANSQEKKMAGQQRQRPNMGALRTKGPVVQYTSDNSAAASTGGGAATPGTPTRPVAPQPAGPPQPSRTESPSFKSQMAKKSTGQLALQPRQGMPSDLQPKPIINALQTNTSRLFLLQSGPVHTLTPITPAPQTVQTAISTYTNERVPQEPSYQAPNDRLFYLTHNCSPECLKRIRPTRPNLHRGRNPLLTPLLYEFRRMTGRRRLNRKMSFHVIYKSPCGLSLRNMTEIQRYLFQTQCDFIFLEMFCLDPYVLVDRRFQPQRPFYFIRDITSGREDIPLSCVNEIDNTPPPSVAYSKERIPEDGVYINTSADFLVGCDCTDGCRDKSKCSCHQLTLQATGCTPGGQINPNAGYHYKRLDECLPTGIYECNKRCRCNMQMCTNRLVQHGLQVRLQLFKTQNKGWGIRCLDDIAKGSFVCIYAGKILTDDFADKEGLEMGDEYFANLDHIESVENFKEGYESEAHCSDSEGSGVDMSRVKLPASSRHGKSNKMEERNSSTTGKSQDDSSEESDDEKDDDSNEDDSDSSDDTFVKDTYYTTSSVWRSYTTRRQAKGLKEESQDSKDGMSVSAGEDRKPPHMPEETGKSKVASWLTNQSSTSANQSVKVEGGIKTEKKDVMTLSDSDDVQTISSGSDDNKEREKKTQAVVKRQVAVKSTRGIALKSHSMMVKSGGGGAGGGGSGPSHGHGGGGGDNGPKNTRLFFDGEESCYIIDAKLEGNLGRYLNHSCSPNLFVQNVFVDTHDLRFPWVAFFASKRIRAGTELTWDYNYEVGSVEGKELLCCCGSTECRGRLLQIIKTEWEGTWW.

A coiled-coil region spans residues 38–61 (KADLEQLQEWVEQREKEVADIDAL). 2 consecutive Tudor domains span residues 266 to 329 (RLFV…LKKT) and 356 to 412 (LLKP…NLKM). The disordered stretch occupies residues 417-513 (SQEKKMAGQQ…QGMPSDLQPK (97 aa)). The segment covering 467–478 (PVAPQPAGPPQP) has biased composition (pro residues). Positions 482–498 (ESPSFKSQMAKKSTGQL) are enriched in polar residues. The MBD domain occupies 595 to 666 (HRGRNPLLTP…EMFCLDPYVL (72 aa)). The 74-residue stretch at 728 to 801 (VGCDCTDGCR…MCTNRLVQHG (74 aa)) folds into the Pre-SET domain. Residues C730, C732, C736, C742, C744, C782, C786, C788, and C793 each coordinate Zn(2+). One can recognise an SET domain in the interval 804 to 1179 (VRLQLFKTQN…AGTELTWDYN (376 aa)). Residues 814–816 (KGW), D852, and Y854 each bind S-adenosyl-L-methionine. Disordered regions lie at residues 892–944 (LPAS…DTFV), 961–1057 (RRQA…KTQA), and 1081–1108 (KSGG…NGPK). Residues 918-940 (DSSEESDDEKDDDSNEDDSDSSD) are compositionally biased toward acidic residues. Composition is skewed to basic and acidic residues over residues 966 to 976 (GLKEESQDSKD) and 983 to 997 (GEDR…ETGK). Residues 1003–1016 (WLTNQSSTSANQSV) show a composition bias toward polar residues. Basic and acidic residues-rich tracts occupy residues 1020 to 1029 (GGIKTEKKDV) and 1046 to 1055 (DDNKEREKKT). A compositionally biased stretch (gly residues) spans 1082 to 1105 (SGGGGAGGGGSGPSHGHGGGGGDN). S-adenosyl-L-methionine contacts are provided by residues R1133 and 1136 to 1137 (NH). Zn(2+) contacts are provided by C1139, C1192, C1194, and C1199. Residues 1188–1204 (KELLCCCGSTECRGRLL) enclose the Post-SET domain.

This sequence belongs to the class V-like SAM-binding methyltransferase superfamily. Histone-lysine methyltransferase family. Suvar3-9 subfamily.

The protein localises to the nucleus. It localises to the chromosome. The enzyme catalyses L-lysyl(4)-[histone H3] + 3 S-adenosyl-L-methionine = N(6),N(6),N(6)-trimethyl-L-lysyl(4)-[histone H3] + 3 S-adenosyl-L-homocysteine + 3 H(+). Functionally, histone methyltransferase that specifically trimethylates 'Lys-9' of histone H3. H3 'Lys-9' trimethylation represents a specific tag for epigenetic transcriptional repression by recruiting HP1 (CBX1, CBX3 and/or CBX5) proteins to methylated histones. Mainly functions in euchromatin regions, thereby playing a central role in the silencing of euchromatic genes. H3 'Lys-9' trimethylation is coordinated with DNA methylation. Plays a role in promoter hypermethylation and transcriptional silencing of tumor suppressor genes (TSGs) or other tumor-related genes. Also required to maintain a transcriptionally repressive state of genes in undifferentiated embryonic stem cells (ESCs). Associates at promoter regions of tumor suppressor genes (TSGs) leading to their gene silencing. This chain is Histone-lysine N-methyltransferase SETDB1-B (setdb1b), found in Danio rerio (Zebrafish).